Reading from the N-terminus, the 246-residue chain is E3 ubiquitin-protein ligase MARCHF2 (246 aa).

The RING-CH-type zinc-finger motif lies at 56–116 (DSQSDCPFCR…ELCHTEFAVE (61 aa)). Cysteine 64, cysteine 67, cysteine 80, cysteine 82, histidine 90, cysteine 93, cysteine 106, and cysteine 109 together coordinate Zn(2+). The interval 121–246 (PLTEWLKDPG…LKKVAEETPV (126 aa)) is required for interaction with IKBKG. 2 helical membrane passes run 138–158 (LCCD…SGWL) and 175–195 (AVGL…WTLV).

As to quaternary structure, interacts with STX6; the interaction promotes MARCHF2-mediated ubiquitination and degradation of CFTR. Interacts with MARCHF3. Interacts with GOPC/CAL; the interaction leads to CFTR ubiquitination and degradation. Interacts with CFTR; the interaction leads to CFTR ubiqtuitination and degradation. Interacts (via PDZ domain) with DLG1 (via PDZ domains); the interaction leads to DLG1 ubiqtuitination and degradation. Interacts with ERGIC3. Interacts with ADRB2. Interacts with IKBKG/NEMO; during the late stages of macrophage viral and bacterial infection; the interaction leads to ubiquitination and degradation of IKBKG/NEMO.

It is found in the endoplasmic reticulum membrane. The protein resides in the lysosome membrane. Its subcellular location is the endosome membrane. The protein localises to the golgi apparatus membrane. It localises to the cytoplasm. It is found in the cell membrane. The enzyme catalyses S-ubiquitinyl-[E2 ubiquitin-conjugating enzyme]-L-cysteine + [acceptor protein]-L-lysine = [E2 ubiquitin-conjugating enzyme]-L-cysteine + N(6)-ubiquitinyl-[acceptor protein]-L-lysine.. It participates in protein modification; protein ubiquitination. E3 ubiquitin-protein ligase that may mediate ubiquitination of TFRC and CD86, and promote their subsequent endocytosis and sorting to lysosomes via multivesicular bodies. E3 ubiquitin ligases accept ubiquitin from an E2 ubiquitin-conjugating enzyme in the form of a thioester and then directly transfer the ubiquitin to targeted substrates. Together with GOPC/CAL mediates the ubiquitination and lysosomal degradation of CFTR. Ubiquitinates and therefore mediates the degradation of DLG1. Regulates the intracellular trafficking and secretion of alpha1-antitrypsin/SERPINA1 and HP/haptoglobin via ubiquitination and degradation of the cargo receptor ERGIC3. Negatively regulates the antiviral and antibacterial immune response by repression of the NF-kB and type 1 IFN signaling pathways, via MARCHF2-mediated K48-linked polyubiquitination of IKBKG/NEMO, resulting in its proteasomal degradation. May be involved in endosomal trafficking through interaction with STX6. This Mus musculus (Mouse) protein is E3 ubiquitin-protein ligase MARCHF2 (Marchf2).